Consider the following 103-residue polypeptide: MNFWAAFSACLVGYLVYSGRLNGELQEIKSILIIAYEAADKRYRGVIDEIESLKTDTFMMLSNLQNNTIRTWDAVAKNGKKIANLDERVNGLLAKHAVPALVR.

The protein is GP16 protein (GP16) of Orgyia pseudotsugata multicapsid polyhedrosis virus (OpMNPV).